Reading from the N-terminus, the 132-residue chain is Small ribosomal subunit protein uS8c (132 aa).

The protein belongs to the universal ribosomal protein uS8 family. Part of the 30S ribosomal subunit.

It is found in the plastid. It localises to the chloroplast. In terms of biological role, one of the primary rRNA binding proteins, it binds directly to 16S rRNA central domain where it helps coordinate assembly of the platform of the 30S subunit. The protein is Small ribosomal subunit protein uS8c (rps8) of Rhodomonas salina (Cryptomonas salina).